Consider the following 246-residue polypeptide: Bis(5'-nucleosyl)-tetraphosphatase PrpE [asymmetrical] (246 aa).

It belongs to the PrpE family. It depends on Ni(2+) as a cofactor.

It carries out the reaction P(1),P(4)-bis(5'-guanosyl) tetraphosphate + H2O = GMP + GTP + 2 H(+). Its function is as follows. Asymmetrically hydrolyzes Ap4p to yield AMP and ATP. The chain is Bis(5'-nucleosyl)-tetraphosphatase PrpE [asymmetrical] from Bacillus cereus (strain Q1).